An 859-amino-acid chain; its full sequence is Leucine--tRNA ligase (859 aa).

Positions 42 to 52 (PYPSGRLHMGH) match the 'HIGH' region motif. The 'KMSKS' region motif lies at 618–622 (KMSKS). Lysine 621 provides a ligand contact to ATP.

This sequence belongs to the class-I aminoacyl-tRNA synthetase family.

The protein resides in the cytoplasm. The catalysed reaction is tRNA(Leu) + L-leucine + ATP = L-leucyl-tRNA(Leu) + AMP + diphosphate. This chain is Leucine--tRNA ligase, found in Shewanella putrefaciens (strain CN-32 / ATCC BAA-453).